Consider the following 455-residue polypeptide: L-serine dehydratase (455 aa).

This sequence belongs to the iron-sulfur dependent L-serine dehydratase family. The cofactor is [4Fe-4S] cluster.

It carries out the reaction L-serine = pyruvate + NH4(+). It functions in the pathway carbohydrate biosynthesis; gluconeogenesis. This Helicobacter pylori (strain ATCC 700392 / 26695) (Campylobacter pylori) protein is L-serine dehydratase (sdaA).